Reading from the N-terminus, the 238-residue chain is Protein-lysine N-methyltransferase efm4 (238 aa).

Belongs to the class I-like SAM-binding methyltransferase superfamily. EFM4 family.

The protein resides in the cytoplasm. It is found in the nucleus. Its function is as follows. S-adenosyl-L-methionine-dependent protein-lysine N-methyltransferase that mono- and dimethylates elongation factor 1-alpha at 'Lys-316'. May play a role in intracellular transport. The protein is Protein-lysine N-methyltransferase efm4 of Schizosaccharomyces pombe (strain 972 / ATCC 24843) (Fission yeast).